A 420-amino-acid polypeptide reads, in one-letter code: L-rhamnose isomerase (420 aa).

Mn(2+)-binding residues include H264, D296, and D298.

Belongs to the rhamnose isomerase family. The cofactor is Mn(2+).

It localises to the cytoplasm. It catalyses the reaction L-rhamnopyranose = L-rhamnulose. It functions in the pathway carbohydrate degradation; L-rhamnose degradation; glycerone phosphate from L-rhamnose: step 1/3. In terms of biological role, catalyzes the interconversion of L-rhamnose and L-rhamnulose. This chain is L-rhamnose isomerase, found in Listeria monocytogenes serovar 1/2a (strain ATCC BAA-679 / EGD-e).